Here is a 200-residue protein sequence, read N- to C-terminus: MKSLHTICLLFIFIARGNSRSCDYCHNIGKDCDGYEHECSSPEDVCGKVFLEISSASLSVRTVHKNCFSSSVCKLGHFDINIGHHSYIRGRINCCEKEPCEDQPFPGLPLSQPNGYYCPGALGLFTEDSTEYEAICKGTETKCINIVGHRHENYPGDISYNLKGCVSSCPLLSLSNSTHEENRNYLEKVECKDAFKIASH.

The first 19 residues, Met-1–Ser-19, serve as a signal peptide directing secretion. Intrachain disulfides connect Cys-22–Cys-46, Cys-25–Cys-32, Cys-39–Cys-67, Cys-73–Cys-94, Cys-95–Cys-100, Cys-118–Cys-143, Cys-136–Cys-165, and Cys-169–Cys-191. Asn-176 carries an N-linked (GlcNAc...) asparagine glycan.

The protein belongs to the CNF-like-inhibitor family. Occurs as a mixture of oligomers. Tetrameric arrangement appears to be the predominant quaternary structure. In terms of tissue distribution, expressed by the liver.

The protein resides in the secreted. Inhibits the enzymatic activity of phospholipase A2 (PA2). This Gloydius brevicaudus siniticus (Chinese mamushi) protein is Phospholipase A2 inhibitor gamma subunit A.